A 127-amino-acid polypeptide reads, in one-letter code: Gamma-synuclein (127 aa).

Tandem repeats lie at residues 20-30 and 31-41. Positions 20-67 are 4 X 11 AA tandem repeats of [EGSA]-K-T-K-[EQ]-[GQ]-V-X(4); sequence EKTKQGVTEAAEKTKEGVMYVGAKTKEGVVQSVTSVAEKTKEQANAVS. Residues 42–56 form a 3; approximate repeat; it reads AKTKEGVVQSVTSVA. Repeat 4 spans residues 57 to 67; sequence EKTKEQANAVS. Residues S67, S72, and S124 each carry the phosphoserine modification. A disordered region spans residues 99–127; that stretch reads ALKQPVPSQEDEAAKAEEQVAEETKSGGD. Basic and acidic residues predominate over residues 110 to 127; sequence EAAKAEEQVAEETKSGGD.

The protein belongs to the synuclein family. In terms of assembly, may be a centrosome-associated protein. Interacts with MYOC; affects its secretion and its aggregation. Post-translationally, phosphorylated by BARK1 and GRK5. In terms of tissue distribution, predominantly expressed in retina (predominantly in outer nuclear layer, also in inner segment of photoreceptor cells, some individual cells located in the inner nuclear layer, inner plexiform layer and in nerve fiber layer). Also found in brain and heart.

The protein resides in the cytoplasm. The protein localises to the perinuclear region. Its subcellular location is the cytoskeleton. It is found in the microtubule organizing center. It localises to the centrosome. The protein resides in the spindle. Plays a role in neurofilament network integrity. May be involved in modulating axonal architecture during development and in the adult. In vitro, increases the susceptibility of neurofilament-H to calcium-dependent proteases. May also function in modulating the keratin network in skin. Activates the MAPK and Elk-1 signal transduction pathway. This chain is Gamma-synuclein (SNCG), found in Bos taurus (Bovine).